We begin with the raw amino-acid sequence, 552 residues long: Esterase E4 (552 aa).

The N-terminal stretch at 1–23 (MKNTCGILLNLFLFIGCFLTCSA) is a signal peptide. A glycan (N-linked (GlcNAc...) asparagine) is linked at N81. A disulfide bridge connects residues C89 and C106. The active-site Acyl-ester intermediate is the S214. Residues C266 and C277 are joined by a disulfide bond. N269 carries N-linked (GlcNAc...) asparagine glycosylation. E339 functions as the Charge relay system in the catalytic mechanism. 3 N-linked (GlcNAc...) asparagine glycosylation sites follow: N371, N404, and N443. H463 serves as the catalytic Charge relay system.

The protein belongs to the type-B carboxylesterase/lipase family.

It carries out the reaction a carboxylic ester + H2O = an alcohol + a carboxylate + H(+). In terms of biological role, overproduction of nonspecific esterases is a common mechanism of resistance to organophosphate insecticides. The protein is Esterase E4 of Myzus persicae (Green peach aphid).